A 985-amino-acid chain; its full sequence is MSRIESLTRARIDRSKEQATKTREKEKMKEAKDARYTNGHLFTTISVSGMTMCYACNKSITAKEALICPTCNVTIHNRCKDTLANCTKVKQKQQKAALLRNNTALQSVSLRSKTTTRERPTSAIYPSDSFRQSLLGSRRGLSSLSLAKSVSTTNIAGHFNDESPLGLRQILSQSTDSLNMRNRTLSVESLIDEGVEVFYNELMSDFEMDEKDFEADSWSLAVDSSFLQQHKKEVMKKQDVIYELIQTELHHVRTLKIMTRLFRTGMLEELQMEPEVVQGLFPCVDELSDIHTRFLNQLLERRRQALCPGSTRNFVIHRLGDLLISQFSGSNAEQMRKTYSEFCSRHTKALKLYKELYARDKRFQQFIRKMTRSAVLKRHGVQECILLVTQRITKYPVLINRILQNSHGVEEEYQDLASALGLVKELLSNVDQDVHELEKEARLQEIYNRMDPRAQTPVPGKGPFGRDELLRRKLIHEGCLLWKTATGRFKDVLLLLMTDVLVFLQEKDQKYIFTSLDKPSVVSLQNLIVRDIANQAKGMFLISSGPPEMYEVHAASRDDRTTWIRVIQQSVRLCPSREDFPLIETEDKAYLRRIKTKLQQKNQALVELLQKNVELFAEMVHFQALKAGFVGMPPPALPRGLFRLESFESLRGERLLKDALREVEGLKDLLLGPCVDLPMTSREPALPLDSDSGSCPGVTANGEARTFNGSIELCRADSDSSQKDRNGNQLRSPQEEVLQPLINLYGLLHGLQAVVVQQERLMEALFPEGPERWEKLSRANSRDGEAGRAAVASVTPEKQATELALLQRQHTLLQEELRRCQRLGEERATEAGSLEARLRESEQARALLEREAEEIRRQLAALGQNEPLPAEAPWARRPLDPRRRSLPAGDALYLSFNPPQPSRGHDRLDLPVTVRSLHRPFDDREAQELGSPEDRLQDSSDPDTGSEEEVSSRLSPPHSPRDFTRMQDIPEETESRDGEPTASES.

The interval 1–32 (MSRIESLTRARIDRSKEQATKTREKEKMKEAK) is disordered. The segment at 39–86 (GHLFTTISVSGMTMCYACNKSITAKEALICPTCNVTIHNRCKDTLANC) adopts a Phorbol-ester/DAG-type zinc-finger fold. Phosphoserine occurs at positions 109, 122, 129, 133, and 137. Residues 131–161 (RQSLLGSRRGLSSLSLAKSVSTTNIAGHFND) form an interaction with DYNLT1 region. At S143 the chain carries Phosphoserine; by PAK4. S151, S163, S172, S174, and S177 each carry phosphoserine. A DH domain is found at 236-433 (KKQDVIYELI…KELLSNVDQD (198 aa)). Residue K354 is modified to N6-acetyllysine. In terms of domain architecture, PH spans 473 to 572 (KLIHEGCLLW…WIRVIQQSVR (100 aa)). Positions 591 to 619 (LRRIKTKLQQKNQALVELLQKNVELFAEM) form a coiled coil. Residues S646 and S649 each carry the phosphoserine modification. A Phosphothreonine; by MAPK1 or MAPK3 modification is found at T680. Phosphoserine is present on residues S692, S710, and S781. At T795 the chain carries Phosphothreonine. Positions 797–866 (EKQATELALL…RQLAALGQNE (70 aa)) form a coiled coil. A Phosphoserine modification is found at S885. Disordered regions lie at residues 890 to 909 (DALY…DRLD) and 918 to 985 (HRPF…ASES). Residue Y893 is modified to Phosphotyrosine. Phosphoserine; by PAK4 is present on S895. Over residues 919 to 938 (RPFDDREAQELGSPEDRLQD) the composition is skewed to basic and acidic residues. Residues S931, S939, and S940 each carry the phosphoserine modification. Residues 940–949 (SDPDTGSEEE) are compositionally biased toward acidic residues. T944 carries the phosphothreonine modification. A phosphoserine mark is found at S946, S951, S952, S955, and S959.

As to quaternary structure, found in a complex composed at least of ARHGEF2, NOD2 and RIPK2. Interacts with RIPK2; the interaction mediates tyrosine phosphorylation of RIPK2 by Src kinase CSK. Interacts with RIPK1 and RIPK3. Interacts with YWHAZ/14-3-3 zeta; when phosphorylated at Ser-885. Interacts with the kinases PAK4, AURKA and MAPK1. Interacts with RHOA and RAC1. Interacts with NOD1. Interacts (via the N- terminal zinc finger) with CAPN6 (via domain II). Interacts with DYNLT1. Post-translationally, phosphorylation of Ser-885 by PAK1 induces binding to protein YWHAZ, promoting its relocation to microtubules and the inhibition of its activity. Phosphorylated by AURKA and CDK1 during mitosis, which negatively regulates its activity. Phosphorylation by MAPK1 or MAPK3 increases nucleotide exchange activity. Phosphorylation by PAK4 releases GEF-H1 from the microtubules. Phosphorylated on serine, threonine and tyrosine residues in a RIPK2-dependent manner. As to expression, ubiquitous, with the exception of liver tissue. Levels are high in hemopoietic tissues (thymus, spleen, bone marrow) as well as in kidney and lung. Expressed in the germinal zones of both the neocortex and the cerebellum and in the pontine gray nuclei.

It localises to the cytoplasm. The protein resides in the cytoskeleton. Its subcellular location is the cell junction. It is found in the tight junction. The protein localises to the golgi apparatus. It localises to the spindle. The protein resides in the cytoplasmic vesicle. Its function is as follows. Activates Rho-GTPases by promoting the exchange of GDP for GTP. May be involved in epithelial barrier permeability, cell motility and polarization, dendritic spine morphology, antigen presentation, leukemic cell differentiation, cell cycle regulation, innate immune response, and cancer. Binds Rac-GTPases, but does not seem to promote nucleotide exchange activity toward Rac-GTPases. May stimulate instead the cortical activity of Rac. Inactive toward CDC42, TC10, or Ras-GTPases. Forms an intracellular sensing system along with NOD1 for the detection of microbial effectors during cell invasion by pathogens. Involved in innate immune signaling transduction pathway promoting cytokine IL6/interleukin-6 and TNF-alpha secretion in macrophage upon stimulation by bacterial peptidoglycans; acts as a signaling intermediate between NOD2 receptor and RIPK2 kinase. Contributes to the tyrosine phosphorylation of RIPK2 through Src tyrosine kinase leading to NF-kappaB activation by NOD2. Overexpression activates Rho-, but not Rac-GTPases, and increases paracellular permeability. Involved in neuronal progenitor cell division and differentiation. Involved in the migration of precerebellar neurons. The sequence is that of Rho guanine nucleotide exchange factor 2 (Arhgef2) from Mus musculus (Mouse).